Reading from the N-terminus, the 259-residue chain is DNA-directed RNA polymerase subunit Rpo3 (259 aa).

This sequence belongs to the archaeal Rpo3/eukaryotic RPB3 RNA polymerase subunit family. As to quaternary structure, part of the RNA polymerase complex.

It localises to the cytoplasm. The catalysed reaction is RNA(n) + a ribonucleoside 5'-triphosphate = RNA(n+1) + diphosphate. Functionally, DNA-dependent RNA polymerase (RNAP) catalyzes the transcription of DNA into RNA using the four ribonucleoside triphosphates as substrates. This Pyrococcus horikoshii (strain ATCC 700860 / DSM 12428 / JCM 9974 / NBRC 100139 / OT-3) protein is DNA-directed RNA polymerase subunit Rpo3.